The chain runs to 190 residues: Elongation factor P (190 aa).

It belongs to the elongation factor P family.

Its subcellular location is the cytoplasm. It participates in protein biosynthesis; polypeptide chain elongation. Its function is as follows. Involved in peptide bond synthesis. Stimulates efficient translation and peptide-bond synthesis on native or reconstituted 70S ribosomes in vitro. Probably functions indirectly by altering the affinity of the ribosome for aminoacyl-tRNA, thus increasing their reactivity as acceptors for peptidyl transferase. This Persephonella marina (strain DSM 14350 / EX-H1) protein is Elongation factor P.